We begin with the raw amino-acid sequence, 436 residues long: Testican-3 (436 aa).

Positions 1-21 are cleaved as a signal peptide; sequence MLKVSAVLCVCAAAWCSQSLA. 8 cysteine pairs are disulfide-bonded: Cys-90–Cys-101, Cys-95–Cys-111, Cys-139–Cys-169, Cys-142–Cys-162, Cys-151–Cys-183, Cys-317–Cys-341, Cys-352–Cys-359, and Cys-361–Cys-380. A Kazal-like domain is found at 133-185; that stretch reads GPILSTCKQCPVVYPSPVCGSDGHTYSFQCKLEYQACVLGKQISVKCEGHCPC. The region spanning 314 to 380 is the Thyroglobulin type-1 domain; the sequence is DPPCQTELSN…GSRINGVADC (67 aa). O-linked (Xyl...) (glycosaminoglycan) serine glycosylation is found at Ser-387 and Ser-392. Residues 393–436 are disordered; sequence GDFHEWTDDEDDEDDIMNDEDEIEDDDEDEGDDDDGGDDHDVYI. Residues 399-430 are compositionally biased toward acidic residues; sequence TDDEDDEDDIMNDEDEIEDDDEDEGDDDDGGD.

Post-translationally, contains chondroitin sulfate and heparan sulfate O-linked oligosaccharides. As to expression, expressed in brain.

It localises to the secreted. It is found in the extracellular space. The protein localises to the extracellular matrix. Its function is as follows. May participate in diverse steps of neurogenesis. Inhibits the processing of pro-matrix metalloproteinase 2 (MMP-2) by MT1-MMP and MT3-MMP. May interfere with tumor invasion. The polypeptide is Testican-3 (SPOCK3) (Homo sapiens (Human)).